Consider the following 206-residue polypeptide: LexA repressor (206 aa).

A DNA-binding region (H-T-H motif) is located at residues 28-48; sequence VREICNAVGLSSTSTVHGHLS. Active-site for autocatalytic cleavage activity residues include Ser128 and Lys166.

The protein belongs to the peptidase S24 family. Homodimer.

The catalysed reaction is Hydrolysis of Ala-|-Gly bond in repressor LexA.. Functionally, represses a number of genes involved in the response to DNA damage (SOS response), including recA and lexA. In the presence of single-stranded DNA, RecA interacts with LexA causing an autocatalytic cleavage which disrupts the DNA-binding part of LexA, leading to derepression of the SOS regulon and eventually DNA repair. The polypeptide is LexA repressor (Ligilactobacillus salivarius (strain UCC118) (Lactobacillus salivarius)).